A 118-amino-acid polypeptide reads, in one-letter code: Large ribosomal subunit protein uL18 (118 aa).

This sequence belongs to the universal ribosomal protein uL18 family. In terms of assembly, part of the 50S ribosomal subunit; part of the 5S rRNA/L5/L18/L25 subcomplex. Contacts the 5S and 23S rRNAs.

In terms of biological role, this is one of the proteins that bind and probably mediate the attachment of the 5S RNA into the large ribosomal subunit, where it forms part of the central protuberance. This chain is Large ribosomal subunit protein uL18, found in Rickettsia peacockii (strain Rustic).